We begin with the raw amino-acid sequence, 177 residues long: Large ribosomal subunit protein uL6 (177 aa).

This sequence belongs to the universal ribosomal protein uL6 family. Part of the 50S ribosomal subunit.

This protein binds to the 23S rRNA, and is important in its secondary structure. It is located near the subunit interface in the base of the L7/L12 stalk, and near the tRNA binding site of the peptidyltransferase center. The protein is Large ribosomal subunit protein uL6 of Rhizobium etli (strain ATCC 51251 / DSM 11541 / JCM 21823 / NBRC 15573 / CFN 42).